Here is a 425-residue protein sequence, read N- to C-terminus: Dihydroorotase (425 aa).

His-56 and His-58 together coordinate Zn(2+). Substrate contacts are provided by residues 58–60 and Asn-90; that span reads HYR. Zn(2+) contacts are provided by Asp-148, His-175, and His-228. Position 274 (Asn-274) interacts with substrate. Asp-301 is a Zn(2+) binding site. Residue Asp-301 is part of the active site. Substrate is bound by residues His-305 and 319–320; that span reads FG.

It belongs to the metallo-dependent hydrolases superfamily. DHOase family. Class I DHOase subfamily. Requires Zn(2+) as cofactor.

The catalysed reaction is (S)-dihydroorotate + H2O = N-carbamoyl-L-aspartate + H(+). The protein operates within pyrimidine metabolism; UMP biosynthesis via de novo pathway; (S)-dihydroorotate from bicarbonate: step 3/3. In terms of biological role, catalyzes the reversible cyclization of carbamoyl aspartate to dihydroorotate. The polypeptide is Dihydroorotase (Lactobacillus johnsonii (strain CNCM I-12250 / La1 / NCC 533)).